Reading from the N-terminus, the 259-residue chain is Dolichol-phosphate mannosyltransferase subunit 1 (259 aa).

Ala-2 carries the N-acetylalanine modification. Position 3 is a phosphoserine (Ser-3). Residues Pro-31, Tyr-33, Glu-35, Ile-62, Asp-64, Asp-117, Ala-118, Asp-119, Arg-146, Arg-233, and Lys-239 each coordinate GDP-alpha-D-mannose. Asp-119 is a binding site for Mg(2+). Residue Asp-119 coordinates Mn(2+).

It belongs to the glycosyltransferase 2 family. Component of the dolichol-phosphate mannose (DPM) synthase complex composed of DPM1, DPM2 and DPM3; within the complex, directly interacts with DPM3. This interaction may stabilize DPM1. Mg(2+) serves as cofactor. Requires Mn(2+) as cofactor. It depends on Ca(2+) as a cofactor.

It is found in the endoplasmic reticulum. It carries out the reaction a di-trans,poly-cis-dolichyl phosphate + GDP-alpha-D-mannose = a di-trans,poly-cis-dolichyl beta-D-mannosyl phosphate + GDP. Its pathway is protein modification; protein glycosylation. Its function is as follows. Transfers mannose from GDP-mannose to dolichol monophosphate to form dolichol phosphate mannose (Dol-P-Man) which is the mannosyl donor in pathways leading to N-glycosylation, glycosyl phosphatidylinositol membrane anchoring, and O-mannosylation of proteins; catalytic subunit of the dolichol-phosphate mannose (DPM) synthase complex. This Sus scrofa (Pig) protein is Dolichol-phosphate mannosyltransferase subunit 1 (DPM1).